Here is a 249-residue protein sequence, read N- to C-terminus: 2,3-bisphosphoglycerate-dependent phosphoglycerate mutase (249 aa).

Substrate is bound by residues 11–18 (RHGESEWN), 24–25 (TG), Arg-63, 90–93 (ERHY), Lys-101, and 117–118 (RR). Catalysis depends on His-12, which acts as the Tele-phosphohistidine intermediate. The active-site Proton donor/acceptor is Glu-90. The segment at 119–138 (SYDTPPPPIERGSTYSQDAD) is disordered. 184–185 (GN) contacts substrate.

The protein belongs to the phosphoglycerate mutase family. BPG-dependent PGAM subfamily.

The catalysed reaction is (2R)-2-phosphoglycerate = (2R)-3-phosphoglycerate. The protein operates within carbohydrate degradation; glycolysis; pyruvate from D-glyceraldehyde 3-phosphate: step 3/5. Its function is as follows. Catalyzes the interconversion of 2-phosphoglycerate and 3-phosphoglycerate. In Mycolicibacterium paratuberculosis (strain ATCC BAA-968 / K-10) (Mycobacterium paratuberculosis), this protein is 2,3-bisphosphoglycerate-dependent phosphoglycerate mutase.